A 144-amino-acid chain; its full sequence is Maximins 3/H2 (144 aa).

Positions 1–18 are cleaved as a signal peptide; it reads MNFKYIVAVSFLIASAYA. 2 propeptides span residues 19–43 and 74–123; these read RSVQ…REIR and TAEE…KEKR. At I143 the chain carries Isoleucine amide.

Belongs to the bombinin family. As to expression, expressed by the skin glands.

The protein resides in the secreted. Its function is as follows. Maximin-3 shows antibacterial activity against both Gram-positive and Gram-negative bacteria. It also shows antimicrobial activity against the fungus C.albicans, but not against A.flavus nor P.uticale. It has little hemolytic activity. It possess a significant cytotoxicity against tumor cell lines. It possess a significant anti-HIV activity. It shows high spermicidal activity. Maximin-H2 shows antibacterial activity against both Gram-positive and Gram-negative bacteria. It also shows antimicrobial activity against the fungus C.albicans. Shows strong hemolytic activity. The sequence is that of Maximins 3/H2 from Bombina maxima (Giant fire-bellied toad).